An 89-amino-acid chain; its full sequence is UPF0367 protein CYB_2632 (89 aa).

Residues 69 to 89 form a disordered region; the sequence is SKSGSASPMGTRPGFLAQLQS.

The protein belongs to the UPF0367 family.

This is UPF0367 protein CYB_2632 from Synechococcus sp. (strain JA-2-3B'a(2-13)) (Cyanobacteria bacterium Yellowstone B-Prime).